A 362-amino-acid polypeptide reads, in one-letter code: Very-long-chain (3R)-3-hydroxyacyl-CoA dehydratase 3 (362 aa).

Met1 is modified (N-acetylmethionine). Residues 1-149 lie on the Cytoplasmic side of the membrane; that stretch reads MENQVLTPHV…ETLTNLRKGY (149 aa). The CS domain maps to 5-94; sequence VLTPHVYWAQ…KVSQWWERLT (90 aa). Thr7 carries the phosphothreonine modification. A coiled-coil region spans residues 111-136; that stretch reads LDESDAEMELRAKEEERLNKLRLESE. 2 positions are modified to phosphoserine: Ser114 and Ser135. The helical transmembrane segment at 150-170 threads the bilayer; that stretch reads LFMYNLVQFLGFSWIFVNLTV. Over 171–185 the chain is Lumenal; that stretch reads RFCILGKESFYDTFH. A helical transmembrane segment spans residues 186–207; it reads TVADMMYFCQMLAVVETINAAI. Residues 208–217 are Cytoplasmic-facing; sequence GVTTSPVLPS. A helical transmembrane segment spans residues 218 to 235; that stretch reads LIQLLGRNFILFIIFGTM. Residues 236 to 241 lie on the Lumenal side of the membrane; it reads EEMQNK. The chain crosses the membrane as a helical span at residues 242–256; the sequence is AVVFFVFYLWSAIEI. Residues 257-279 are Cytoplasmic-facing; that stretch reads FRYSFYMLTCIDMDWKVLTWLRY. A helical membrane pass occupies residues 280 to 298; the sequence is TLWIPLYPLGCLAEAVSVI. Active-site residues include Tyr286 and Glu293. Residues 299–322 lie on the Lumenal side of the membrane; sequence QSIPIFNETGRFSFTLPYPVKIKV. A helical transmembrane segment spans residues 323 to 343; sequence RFSFFLQIYLIMIFLGLYINF. Residues 344 to 362 lie on the Cytoplasmic side of the membrane; the sequence is RHLYKQRRRRYGQKKKKIH.

The protein belongs to the very long-chain fatty acids dehydratase HACD family. In terms of assembly, may interact with enzymes of the ELO family (including ELOVL1); with those enzymes that mediate condensation, the first of the four steps of the reaction cycle responsible for fatty acids elongation, may be part of a larger fatty acids elongase complex. Interacts with RAC1. Associates with internalized insulin receptor/INSR complexes on Golgi/endosomal membranes; HACD3/PTPLAD1 together with ATIC and PRKAA2/AMPK2 is proposed to be part of a signaling network regulating INSR autophosphorylation and endocytosis. As to expression, highly expressed in testis, kidney, brain, liver and weakly in skeletal muscle, spleen and heart. No expression detected in leukocytes.

It localises to the endoplasmic reticulum membrane. The catalysed reaction is a very-long-chain (3R)-3-hydroxyacyl-CoA = a very-long-chain (2E)-enoyl-CoA + H2O. It catalyses the reaction (3R)-hydroxyhexadecanoyl-CoA = (2E)-hexadecenoyl-CoA + H2O. The protein operates within lipid metabolism; fatty acid biosynthesis. In terms of biological role, catalyzes the third of the four reactions of the long-chain fatty acids elongation cycle. This endoplasmic reticulum-bound enzymatic process, allows the addition of two carbons to the chain of long- and very long-chain fatty acids/VLCFAs per cycle. This enzyme catalyzes the dehydration of the 3-hydroxyacyl-CoA intermediate into trans-2,3-enoyl-CoA, within each cycle of fatty acid elongation. Thereby, it participates in the production of VLCFAs of different chain lengths that are involved in multiple biological processes as precursors of membrane lipids and lipid mediators. May be involved in Rac1-signaling pathways leading to the modulation of gene expression. Promotes insulin receptor/INSR autophosphorylation and is involved in INSR internalization. This is Very-long-chain (3R)-3-hydroxyacyl-CoA dehydratase 3 from Homo sapiens (Human).